A 384-amino-acid chain; its full sequence is Gastrin-releasing peptide receptor (384 aa).

Topologically, residues methionine 1–glycine 39 are extracellular. N-linked (GlcNAc...) asparagine glycosylation is found at asparagine 5, asparagine 20, and asparagine 24. Residues isoleucine 40–isoleucine 63 form a helical membrane-spanning segment. Topologically, residues lysine 64–asparagine 77 are cytoplasmic. A helical transmembrane segment spans residues leucine 78–valine 97. The Extracellular portion of the chain corresponds to aspartate 98 to lysine 115. A disulfide bridge connects residues cysteine 114 and cysteine 197. The chain crosses the membrane as a helical span at residues leucine 116–alanine 137. Topologically, residues aspartate 138 to histidine 153 are cytoplasmic. A helical transmembrane segment spans residues alanine 154–proline 175. Topologically, residues glutamate 176 to lysine 209 are extracellular. A helical transmembrane segment spans residues isoleucine 210–alanine 235. Residues arginine 236 to lysine 265 are Cytoplasmic-facing. The chain crosses the membrane as a helical span at residues threonine 266 to leucine 286. Residues tyrosine 287–methionine 299 are Extracellular-facing. A helical membrane pass occupies residues leucine 300–leucine 326. Topologically, residues serine 327–valine 384 are cytoplasmic. Residue cysteine 340 is the site of S-palmitoyl cysteine attachment. The residue at position 351 (serine 351) is a Phosphoserine.

Belongs to the G-protein coupled receptor 1 family. As to expression, expressed in the hippocampal CA1 region (at protein level).

It localises to the cell membrane. Its function is as follows. Receptor for gastrin-releasing peptide (GRP). Signals via association with G proteins that activate a phosphatidylinositol-calcium second messenger system, resulting in Akt phosphorylation. Contributes to the regulation of food intake. Contributes to the perception of prurient stimuli and transmission of itch signals in the spinal cord that promote scratching behavior, but does not play a role in the perception of pain. Contributes primarily to nonhistaminergic itch sensation. In one study, shown to act in the amygdala as part of an inhibitory network which inhibits memory specifically related to learned fear. In another study, shown to contribute to disinhibition of glutamatergic cells in the auditory cortex via signaling on vasoactive intestinal peptide-expressing cells which leads to enhanced auditory fear memories. Contributes to the induction of sighing through signaling in the pre-Botzinger complex, a cluster of several thousand neurons in the ventrolateral medulla responsible for inspiration during respiratory activity. The polypeptide is Gastrin-releasing peptide receptor (Grpr) (Rattus norvegicus (Rat)).